A 408-amino-acid chain; its full sequence is Aspartokinase 2 (408 aa).

7–10 is a binding site for ATP; the sequence is KFGG. 25-30 contributes to the substrate binding site; the sequence is RAIAEK. Ser-41 provides a ligand contact to ATP. Residues 47 to 49, Glu-74, 125 to 126, 150 to 153, and Ser-153 contribute to the substrate site; these read TDE, LE, and RGGS. ATP is bound by residues 173–174 and 179–184; these read TD and FTTDPR. ACT domains follow at residues 264 to 337 and 343 to 408; these read VTIY…TESK and IVGS…PSAV. Substrate is bound by residues 289–291, Gln-295, 354–355, 368–369, and 375–376; these read NVD, VA, LI, and SE.

It belongs to the aspartokinase family. As to quaternary structure, tetramer consisting of 2 isoforms Alpha (catalytic and regulation) and of a homodimer of 2 isoforms Beta (regulation).

The catalysed reaction is L-aspartate + ATP = 4-phospho-L-aspartate + ADP. Its pathway is amino-acid biosynthesis; L-lysine biosynthesis via DAP pathway; (S)-tetrahydrodipicolinate from L-aspartate: step 1/4. It functions in the pathway amino-acid biosynthesis; L-methionine biosynthesis via de novo pathway; L-homoserine from L-aspartate: step 1/3. It participates in amino-acid biosynthesis; L-threonine biosynthesis; L-threonine from L-aspartate: step 1/5. Lysine-sensitive. Regulated by degradation in response to starvation of cells for various nutrients. Ammonium starvation induced the fastest aspartokinase II decline, followed by amino acid starvation and glucose limitation. Its function is as follows. Catalyzes the phosphorylation of the beta-carboxyl group of aspartic acid with ATP to yield 4-phospho-L-aspartate, which is involved in the branched biosynthetic pathway leading to the biosynthesis of amino acids threonine, isoleucine and methionine. The polypeptide is Aspartokinase 2 (lysC) (Bacillus subtilis (strain 168)).